Consider the following 185-residue polypeptide: Disulfide bond formation protein B (185 aa).

The Cytoplasmic portion of the chain corresponds to 1–25; it reads MLLFFVILGIFVLTILKAISKQRWS. Residues 26–42 form a helical membrane-spanning segment; the sequence is WLLLAASALSLELSALY. Over 43-60 the chain is Periplasmic; that stretch reads FQHVMQLEPCVMCVYERL. The cysteines at positions 52 and 55 are disulfide-linked. The chain crosses the membrane as a helical span at residues 61–76; sequence AMLGILLAGLIGASSP. At 77 to 83 the chain is on the cytoplasmic side; sequence NNVFIRL. The helical transmembrane segment at 84–101 threads the bilayer; that stretch reads SAFLLWGISAVWGILLAI. The Periplasmic portion of the chain corresponds to 102–156; the sequence is KHTDYQLHPSPFFTCDFFPNFPAWAPLHEWLPWLFNPTGDCSDIVWQFLGYSMPQ. Cys-116 and Cys-142 form a disulfide bridge. Residues 157–175 traverse the membrane as a helical segment; sequence WLIVSFSLYTLLFIIFAIS. Over 176-185 the chain is Cytoplasmic; it reads AVLKTKKQLF.

Belongs to the DsbB family.

It is found in the cell inner membrane. In terms of biological role, required for disulfide bond formation in some periplasmic proteins. Acts by oxidizing the DsbA protein. The sequence is that of Disulfide bond formation protein B from Psychromonas ingrahamii (strain DSM 17664 / CCUG 51855 / 37).